The following is a 710-amino-acid chain: Polyribonucleotide nucleotidyltransferase (710 aa).

The Mg(2+) site is built by aspartate 489 and aspartate 495. Positions 556–615 constitute a KH domain; the sequence is PKIDTIKIDVDKIKVVIGKGGETIDKIIAETGVKIDIDDEGNVSIYSSDQAAIDRTKEII. Residues 625–693 enclose the S1 motif domain; the sequence is GEVYHAKVIR…EKGRVDASMK (69 aa). A disordered region spans residues 691–710; sequence SMKALIPRPPKPEKKEEKHD. The segment covering 700–710 has biased composition (basic and acidic residues); sequence PKPEKKEEKHD.

The protein belongs to the polyribonucleotide nucleotidyltransferase family. Requires Mg(2+) as cofactor.

It localises to the cytoplasm. It catalyses the reaction RNA(n+1) + phosphate = RNA(n) + a ribonucleoside 5'-diphosphate. In terms of biological role, involved in mRNA degradation. Catalyzes the phosphorolysis of single-stranded polyribonucleotides processively in the 3'- to 5'-direction. In Streptococcus pyogenes serotype M4 (strain MGAS10750), this protein is Polyribonucleotide nucleotidyltransferase.